A 282-amino-acid polypeptide reads, in one-letter code: HTH-type transcriptional activator RhaR (282 aa).

The HTH araC/xylS-type domain occupies 179 to 277; it reads DKLITRLAAS…GMTPSQWRHL (99 aa). 2 DNA-binding regions (H-T-H motif) span residues 196 to 217 and 244 to 267; these read DKFC…RQQT and ISDI…TRET.

As to quaternary structure, binds DNA as a dimer.

It is found in the cytoplasm. In terms of biological role, activates expression of the rhaSR operon in response to L-rhamnose. This chain is HTH-type transcriptional activator RhaR, found in Shigella dysenteriae serotype 1 (strain Sd197).